Reading from the N-terminus, the 860-residue chain is MTEYTPMIKQYLEIKDKYQDAFLFFRLGDFYEMFFEDALNASQILEITLTGREGGTKEKIPMCGVPYHSASGYIDTLIEKGYKVAICEQVEDPKTTKGMVKREVVQLISPGTVMDERGLKAKENNYIASLYCYEGKEYGFAYSDLSTGELKSTVIEASEDRLINELTTLSTRELIVSSSEKEVLSDVMKEQLGLTFSVHEEDTIPVENEKLVTRHMSLSEKRAIGKLLHYLKETQKRDLGHLQQAVHYETSNYMKMDYYSKRNLELAESIRGKGRQGTLLWLLDNTQTAMGGRMLKQWIDRPLIDRKKIIDRQNDVSELMAHFFERLELVENLKNVYDLERLAGRVAYGNVNARDLIQLRNSLYQIPRIRATLLSMSSESLTELANQLDPCEELTEKLEEAIMDSAPISIREGGIIKDGYNSQLDTYRDASRNGKTWIAELERKERELTGIKTMKVGFNRVFGYYIEVTRANTHLLPEGRYERKQTLTNAERYITPELKEKEKLILDAEEKSMELEYQLFSEVREMVKDYIERLQKLAKSVSEIDCLQSFADISEKNHFIRPTLSEDGSLHVKQGRHPVVEKVMGAQSYVANDCVLDENREILLITGPNMSGKSTYMRQVALTAICAQVGCFVPAEEAILPIFDQIFTRIGAADDLIAGQSTFMVEMLEARNAIVHATKDSLILFDEIGRGTATYDGMALAQAIIEYIHENVHAKTLFSTHYHELTDLEKELSGLQNIHVSAVEENGKVVFLHKIKEGPADKSYGIHVAELAELPKSLIERASRILEQLENDDKKIIIASVKQPEEVHEEVQLSMFPVEPEKKASSKETKLLKEIASMNIMQMTPMDAMNKLYELQSKIH.

Residue 607 to 614 (GPNMSGKS) coordinates ATP.

Belongs to the DNA mismatch repair MutS family.

Its function is as follows. This protein is involved in the repair of mismatches in DNA. It is possible that it carries out the mismatch recognition step. This protein has a weak ATPase activity. This chain is DNA mismatch repair protein MutS, found in Listeria monocytogenes serotype 4b (strain CLIP80459).